A 59-amino-acid polypeptide reads, in one-letter code: Large ribosomal subunit protein eL29 (59 aa).

Positions 1–26 are enriched in basic residues; that stretch reads MAKSKNHTAHNQTRKAHRNGIKKPKT. The disordered stretch occupies residues 1–37; it reads MAKSKNHTAHNQTRKAHRNGIKKPKTYKYPSLKGVDP. Lys52 participates in a covalent cross-link: Glycyl lysine isopeptide (Lys-Gly) (interchain with G-Cter in ubiquitin).

The protein belongs to the eukaryotic ribosomal protein eL29 family. As to quaternary structure, component of the large ribosomal subunit (LSU). Mature yeast ribosomes consist of a small (40S) and a large (60S) subunit. The 40S small subunit contains 1 molecule of ribosomal RNA (18S rRNA) and 33 different proteins (encoded by 57 genes). The large 60S subunit contains 3 rRNA molecules (25S, 5.8S and 5S rRNA) and 46 different proteins (encoded by 81 genes).

It is found in the cytoplasm. In terms of biological role, component of the ribosome, a large ribonucleoprotein complex responsible for the synthesis of proteins in the cell. The small ribosomal subunit (SSU) binds messenger RNAs (mRNAs) and translates the encoded message by selecting cognate aminoacyl-transfer RNA (tRNA) molecules. The large subunit (LSU) contains the ribosomal catalytic site termed the peptidyl transferase center (PTC), which catalyzes the formation of peptide bonds, thereby polymerizing the amino acids delivered by tRNAs into a polypeptide chain. The nascent polypeptides leave the ribosome through a tunnel in the LSU and interact with protein factors that function in enzymatic processing, targeting, and the membrane insertion of nascent chains at the exit of the ribosomal tunnel. This Saccharomyces cerevisiae (strain ATCC 204508 / S288c) (Baker's yeast) protein is Large ribosomal subunit protein eL29.